The following is a 275-amino-acid chain: Elongation factor Ts (275 aa).

The segment at 80–83 (TDFV) is involved in Mg(2+) ion dislocation from EF-Tu.

It belongs to the EF-Ts family.

The protein localises to the cytoplasm. Functionally, associates with the EF-Tu.GDP complex and induces the exchange of GDP to GTP. It remains bound to the aminoacyl-tRNA.EF-Tu.GTP complex up to the GTP hydrolysis stage on the ribosome. The sequence is that of Elongation factor Ts from Clavibacter sepedonicus (Clavibacter michiganensis subsp. sepedonicus).